We begin with the raw amino-acid sequence, 479 residues long: Splicing factor ESS-2 homolog (479 aa).

M1 carries the post-translational modification N-acetylmethionine. Disordered stretches follow at residues 1-38 and 95-152; these read MGTPGTSAGALFLSSASAPSRKRAAGEAGEAGVARSRQ and GKIS…PSLD. T3 is subject to Phosphothreonine. The span at 7-19 shows a compositional bias: low complexity; sequence SAGALFLSSASAP. Acidic residues predominate over residues 135–145; that stretch reads DDGEAGEEEEK. K145 participates in a covalent cross-link: Glycyl lysine isopeptide (Lys-Gly) (interchain with G-Cter in SUMO2). At S295 the chain carries Phosphoserine. Phosphothreonine is present on T389. Phosphoserine is present on residues S394 and S398. Residues 415–479 are disordered; that stretch reads RALRASYTPS…PARRKASDFF (65 aa). Residues 433-454 are compositionally biased toward low complexity; that stretch reads TPAGGPQTPTSTPAPGSATRTP. A compositionally biased stretch (polar residues) spans 455-466; that stretch reads LTQDPASITDNL.

It belongs to the ESS2 family. As to quaternary structure, identified in the spliceosome C complex. Interacts with FRA10AC1. As to expression, in the adult, widely expressed with highest expression in the testis and brain. Also widely expressed in the embryo with highest levels in the anterior pons.

The protein resides in the nucleus. Functionally, may be involved in pre-mRNA splicing. The sequence is that of Splicing factor ESS-2 homolog (Ess2) from Mus musculus (Mouse).